Consider the following 184-residue polypeptide: UPF0398 protein BAA_1648 (184 aa).

It belongs to the UPF0398 family.

This is UPF0398 protein BAA_1648 from Bacillus anthracis (strain A0248).